The primary structure comprises 648 residues: Cysteine-rich receptor-like protein kinase 38 (648 aa).

An N-terminal signal peptide occupies residues 1 to 25 (MKNSAAIFLTSSLILLLQTLHGVKA). 2 consecutive Gnk2-homologous domains span residues 26–127 (GFIC…DQST) and 140–247 (PSPV…FYPF). At 26–278 (GFICVGSSFP…EAISITRLKG (253 aa)) the chain is on the extracellular side. 5 N-linked (GlcNAc...) asparagine glycosylation sites follow: Asn-37, Asn-63, Asn-151, Asn-174, and Asn-253. The helical transmembrane segment at 279–299 (GIIAIFVVPIVINLLVFIGLI) threads the bilayer. Over 300-648 (RAYTRIRKSY…ELSITELSPR (349 aa)) the chain is Cytoplasmic. Residues 339–611 (FSFENKIGQG…VIQWLGSETI (273 aa)) form the Protein kinase domain. Residues 345–353 (IGQGGFGSV) and Lys-367 contribute to the ATP site. Phosphotyrosine is present on Tyr-412. Asp-464 acts as the Proton acceptor in catalysis. Ser-468 is modified (phosphoserine). Residue Thr-504 is modified to Phosphothreonine. Residue Tyr-512 is modified to Phosphotyrosine.

This sequence belongs to the protein kinase superfamily. Ser/Thr protein kinase family. CRK subfamily.

It localises to the membrane. It catalyses the reaction L-seryl-[protein] + ATP = O-phospho-L-seryl-[protein] + ADP + H(+). It carries out the reaction L-threonyl-[protein] + ATP = O-phospho-L-threonyl-[protein] + ADP + H(+). This Arabidopsis thaliana (Mouse-ear cress) protein is Cysteine-rich receptor-like protein kinase 38 (CRK38).